Consider the following 338-residue polypeptide: Glycerol-3-phosphate dehydrogenase [NAD(P)+] 1 (338 aa).

5 residues coordinate NADPH: Ser-11, Trp-12, His-32, Arg-33, and Lys-109. Residues Lys-109, Gly-140, and Ser-142 each contribute to the sn-glycerol 3-phosphate site. Ala-144 is a binding site for NADPH. Sn-glycerol 3-phosphate-binding residues include Lys-195, Asp-248, Ser-258, Arg-259, and Asn-260. The Proton acceptor role is filled by Lys-195. Arg-259 contributes to the NADPH binding site. The NADPH site is built by Val-283 and Glu-285.

The protein belongs to the NAD-dependent glycerol-3-phosphate dehydrogenase family.

It is found in the cytoplasm. It catalyses the reaction sn-glycerol 3-phosphate + NAD(+) = dihydroxyacetone phosphate + NADH + H(+). The enzyme catalyses sn-glycerol 3-phosphate + NADP(+) = dihydroxyacetone phosphate + NADPH + H(+). It functions in the pathway membrane lipid metabolism; glycerophospholipid metabolism. Catalyzes the reduction of the glycolytic intermediate dihydroxyacetone phosphate (DHAP) to sn-glycerol 3-phosphate (G3P), the key precursor for phospholipid synthesis. This is Glycerol-3-phosphate dehydrogenase [NAD(P)+] 1 from Lactobacillus delbrueckii subsp. bulgaricus (strain ATCC 11842 / DSM 20081 / BCRC 10696 / JCM 1002 / NBRC 13953 / NCIMB 11778 / NCTC 12712 / WDCM 00102 / Lb 14).